Here is a 263-residue protein sequence, read N- to C-terminus: Ycf3-interacting protein 1, chloroplastic (263 aa).

Residues 1 to 71 (MASNMLQLSL…VNKEEDSATY (71 aa)) constitute a chloroplast transit peptide. A helical transmembrane segment spans residues 238-258 (ALYLVSAFPIIIGISVVLILF).

Belongs to the Y3IP1/CEST family. In terms of assembly, interacts with Ycf3.

It localises to the plastid. The protein resides in the chloroplast thylakoid membrane. Nuclear genome-encoded factor that participates in photosystem I (PSI) biogenesis. Cooperates with the plastid genome-encoded protein PSI assembly Ycf3 in the assembly of stable PSI units in the thylakoid membrane. The chain is Ycf3-interacting protein 1, chloroplastic from Nicotiana tabacum (Common tobacco).